Here is a 346-residue protein sequence, read N- to C-terminus: Cyclin-dependent kinase 20 (346 aa).

One can recognise a Protein kinase domain in the interval 4–288 (YCILGRIGEG…ASKALLHQYF (285 aa)). ATP contacts are provided by residues 10–18 (IGEGAHGIV) and lysine 33. Residue aspartate 127 is the Proton acceptor of the active site.

This sequence belongs to the protein kinase superfamily. CMGC Ser/Thr protein kinase family. CDC2/CDKX subfamily. As to quaternary structure, monomer. Interacts with TBC1D32 and MAK.

Its subcellular location is the nucleus. It is found in the cytoplasm. The protein resides in the cell projection. The protein localises to the cilium. It catalyses the reaction L-seryl-[protein] + ATP = O-phospho-L-seryl-[protein] + ADP + H(+). The enzyme catalyses L-threonyl-[protein] + ATP = O-phospho-L-threonyl-[protein] + ADP + H(+). Functionally, required for high-level Shh responses in the developing neural tube. Together with TBC1D32, controls the structure of the primary cilium by coordinating assembly of the ciliary membrane and axoneme, allowing GLI2 to be properly activated in response to SHH signaling. Involved in cell growth. Activates CDK2, a kinase involved in the control of the cell cycle, by phosphorylating residue 'Thr-160'. The chain is Cyclin-dependent kinase 20 (CDK20) from Pongo abelii (Sumatran orangutan).